A 255-amino-acid polypeptide reads, in one-letter code: ATP synthase subunit a (255 aa).

6 helical membrane passes run 28 to 48, 86 to 106, 125 to 145, 164 to 184, 203 to 223, and 224 to 244; these read VDSL…FWLG, IAPL…MDLV, ILPT…FFLI, FHPF…IELI, LIFI…GTPW, and AIFH…LTVV.

It belongs to the ATPase A chain family. F-type ATPases have 2 components, CF(1) - the catalytic core - and CF(0) - the membrane proton channel. CF(1) has five subunits: alpha(3), beta(3), gamma(1), delta(1), epsilon(1). CF(0) has three main subunits: a(1), b(2) and c(9-12). The alpha and beta chains form an alternating ring which encloses part of the gamma chain. CF(1) is attached to CF(0) by a central stalk formed by the gamma and epsilon chains, while a peripheral stalk is formed by the delta and b chains.

The protein resides in the cell inner membrane. In terms of biological role, key component of the proton channel; it plays a direct role in the translocation of protons across the membrane. This is ATP synthase subunit a from Alkalilimnicola ehrlichii (strain ATCC BAA-1101 / DSM 17681 / MLHE-1).